The sequence spans 250 residues: Probable septum site-determining protein MinC (250 aa).

The segment at 110 to 143 is disordered; sequence SGARERPLEPEPEVVKKPEPAPAPPPPPEPEVRP. Residues 112-128 show a composition bias toward basic and acidic residues; it reads ARERPLEPEPEVVKKPE. Residues 129 to 138 are compositionally biased toward pro residues; sequence PAPAPPPPPE.

The protein belongs to the MinC family. Interacts with MinD and FtsZ.

Cell division inhibitor that blocks the formation of polar Z ring septums. Rapidly oscillates between the poles of the cell to destabilize FtsZ filaments that have formed before they mature into polar Z rings. Prevents FtsZ polymerization. The chain is Probable septum site-determining protein MinC from Pseudomonas putida (strain ATCC 47054 / DSM 6125 / CFBP 8728 / NCIMB 11950 / KT2440).